A 431-amino-acid polypeptide reads, in one-letter code: D-inositol 3-phosphate glycosyltransferase (431 aa).

H21 is a binding site for 1D-myo-inositol 3-phosphate. Residues 27 to 28 (QP) and G35 contribute to the UDP-N-acetyl-alpha-D-glucosamine site. 1D-myo-inositol 3-phosphate-binding positions include 32–37 (DAGGMN), R90, Y123, T147, and R167. Residues R241, K246, and Q307 each contribute to the UDP-N-acetyl-alpha-D-glucosamine site. Mg(2+) contacts are provided by Y316, R317, and A319. UDP-N-acetyl-alpha-D-glucosamine contacts are provided by E329 and E337. Mg(2+) is bound at residue T343.

The protein belongs to the glycosyltransferase group 1 family. MshA subfamily. Homodimer.

The catalysed reaction is 1D-myo-inositol 3-phosphate + UDP-N-acetyl-alpha-D-glucosamine = 1D-myo-inositol 2-acetamido-2-deoxy-alpha-D-glucopyranoside 3-phosphate + UDP + H(+). In terms of biological role, catalyzes the transfer of a N-acetyl-glucosamine moiety to 1D-myo-inositol 3-phosphate to produce 1D-myo-inositol 2-acetamido-2-deoxy-glucopyranoside 3-phosphate in the mycothiol biosynthesis pathway. This chain is D-inositol 3-phosphate glycosyltransferase, found in Saccharomonospora viridis (strain ATCC 15386 / DSM 43017 / JCM 3036 / CCUG 5913 / NBRC 12207 / NCIMB 9602 / P101) (Thermoactinomyces viridis).